A 5162-amino-acid chain; its full sequence is Linear gramicidin synthase subunit B (5162 aa).

4 consecutive Carrier domains span residues 963 to 1038 (APRN…QALR), 2027 to 2101 (EPQS…VVLE), 3541 to 3616 (APRN…GAIG), and 4601 to 4675 (AATS…GQST). Ser998, Ser2062, Ser3576, and Ser4636 each carry O-(pantetheine 4'-phosphoryl)serine.

The protein belongs to the ATP-dependent AMP-binding enzyme family. In terms of assembly, large multienzyme complex composed of 4 subunits; LgrA, LgrB, LgrC and LgrD. Pantetheine 4'-phosphate is required as a cofactor.

Activates the 3rd to 6th amino acids (Ala, D-Leu, Ala and D-Val) in linear gramicidin and catalyzes the formation of the peptide bond between them. This enzyme is also responsible for the epimerization of the 4th (D-Leu) and the 6th (D-Val) amino acids. The chain is Linear gramicidin synthase subunit B (lgrB) from Brevibacillus parabrevis.